A 195-amino-acid polypeptide reads, in one-letter code: ATP-dependent Clp protease proteolytic subunit (195 aa).

Serine 98 functions as the Nucleophile in the catalytic mechanism. Histidine 123 is an active-site residue.

Belongs to the peptidase S14 family. In terms of assembly, fourteen ClpP subunits assemble into 2 heptameric rings which stack back to back to give a disk-like structure with a central cavity, resembling the structure of eukaryotic proteasomes.

Its subcellular location is the cytoplasm. The catalysed reaction is Hydrolysis of proteins to small peptides in the presence of ATP and magnesium. alpha-casein is the usual test substrate. In the absence of ATP, only oligopeptides shorter than five residues are hydrolyzed (such as succinyl-Leu-Tyr-|-NHMec, and Leu-Tyr-Leu-|-Tyr-Trp, in which cleavage of the -Tyr-|-Leu- and -Tyr-|-Trp bonds also occurs).. Its function is as follows. Cleaves peptides in various proteins in a process that requires ATP hydrolysis. Has a chymotrypsin-like activity. Plays a major role in the degradation of misfolded proteins. In Helicobacter pylori (strain Shi470), this protein is ATP-dependent Clp protease proteolytic subunit.